We begin with the raw amino-acid sequence, 217 residues long: Probable GTP-binding protein EngB (217 aa).

Positions 44–217 constitute an EngB-type G domain; sequence DRVEVCFAGR…TLRSIIAHLE (174 aa). Residues 52-59, 79-83, 97-100, 164-167, and 198-200 contribute to the GTP site; these read GRSNVGKS, GRTQE, DLPG, TKAD, and TSS. Ser59 and Thr81 together coordinate Mg(2+).

It belongs to the TRAFAC class TrmE-Era-EngA-EngB-Septin-like GTPase superfamily. EngB GTPase family. Requires Mg(2+) as cofactor.

In terms of biological role, necessary for normal cell division and for the maintenance of normal septation. The protein is Probable GTP-binding protein EngB of Ruegeria pomeroyi (strain ATCC 700808 / DSM 15171 / DSS-3) (Silicibacter pomeroyi).